We begin with the raw amino-acid sequence, 171 residues long: tRNA-specific adenosine deaminase (171 aa).

The region spanning 6–133 (EEQTYFMQEA…ERLNHRVQVE (128 aa)) is the CMP/dCMP-type deaminase domain. H57 is a Zn(2+) binding site. The active-site Proton donor is E59. Residues C87 and C90 each coordinate Zn(2+).

It belongs to the cytidine and deoxycytidylate deaminase family. As to quaternary structure, homodimer. Requires Zn(2+) as cofactor.

The catalysed reaction is adenosine(34) in tRNA + H2O + H(+) = inosine(34) in tRNA + NH4(+). In terms of biological role, catalyzes the deamination of adenosine to inosine at the wobble position 34 of tRNA(Arg2). In Streptococcus pyogenes serotype M3 (strain ATCC BAA-595 / MGAS315), this protein is tRNA-specific adenosine deaminase.